The sequence spans 437 residues: 3-phosphoshikimate 1-carboxyvinyltransferase (437 aa).

Lysine 24, serine 25, and arginine 29 together coordinate 3-phosphoshikimate. Residue lysine 24 coordinates phosphoenolpyruvate. Phosphoenolpyruvate-binding residues include glycine 95 and arginine 123. Residues serine 168, glutamine 170, aspartate 317, and lysine 344 each coordinate 3-phosphoshikimate. Glutamine 170 is a binding site for phosphoenolpyruvate. The Proton acceptor role is filled by aspartate 317. Residues arginine 348 and arginine 390 each contribute to the phosphoenolpyruvate site.

It belongs to the EPSP synthase family. Monomer.

It localises to the cytoplasm. The catalysed reaction is 3-phosphoshikimate + phosphoenolpyruvate = 5-O-(1-carboxyvinyl)-3-phosphoshikimate + phosphate. It functions in the pathway metabolic intermediate biosynthesis; chorismate biosynthesis; chorismate from D-erythrose 4-phosphate and phosphoenolpyruvate: step 6/7. Catalyzes the transfer of the enolpyruvyl moiety of phosphoenolpyruvate (PEP) to the 5-hydroxyl of shikimate-3-phosphate (S3P) to produce enolpyruvyl shikimate-3-phosphate and inorganic phosphate. In Wolinella succinogenes (strain ATCC 29543 / DSM 1740 / CCUG 13145 / JCM 31913 / LMG 7466 / NCTC 11488 / FDC 602W) (Vibrio succinogenes), this protein is 3-phosphoshikimate 1-carboxyvinyltransferase.